The sequence spans 200 residues: Large ribosomal subunit protein bL25 (200 aa).

It belongs to the bacterial ribosomal protein bL25 family. CTC subfamily. In terms of assembly, part of the 50S ribosomal subunit; part of the 5S rRNA/L5/L18/L25 subcomplex. Contacts the 5S rRNA. Binds to the 5S rRNA independently of L5 and L18.

Functionally, this is one of the proteins that binds to the 5S RNA in the ribosome where it forms part of the central protuberance. The sequence is that of Large ribosomal subunit protein bL25 from Caldicellulosiruptor bescii (strain ATCC BAA-1888 / DSM 6725 / KCTC 15123 / Z-1320) (Anaerocellum thermophilum).